Reading from the N-terminus, the 32-residue chain is Cytochrome b6-f complex subunit 8 (32 aa).

Residues 6-26 form a helical membrane-spanning segment; that stretch reads IVGITWAALMVVFTFSLSLVV.

The protein belongs to the PetN family. As to quaternary structure, the 4 large subunits of the cytochrome b6-f complex are cytochrome b6, subunit IV (17 kDa polypeptide, PetD), cytochrome f and the Rieske protein, while the 4 small subunits are PetG, PetL, PetM and PetN. The complex functions as a dimer.

The protein localises to the plastid. The protein resides in the chloroplast thylakoid membrane. Its function is as follows. Component of the cytochrome b6-f complex, which mediates electron transfer between photosystem II (PSII) and photosystem I (PSI), cyclic electron flow around PSI, and state transitions. This chain is Cytochrome b6-f complex subunit 8, found in Pinus koraiensis (Korean pine).